The chain runs to 1219 residues: Regulator of telomere elongation helicase 1 (1219 aa).

Positions 7–296 (NGVTVDFPFQ…TKAAQQGEPH (290 aa)) constitute a Helicase ATP-binding domain. 42–49 (SPTGTGKT) serves as a coordination point for ATP. The [4Fe-4S] cluster site is built by cysteine 145, cysteine 163, cysteine 172, and cysteine 207. The short motif at 151–167 (KKQESNHLQIHLCRKKV) is the Nuclear localization signal element. The DEAH box motif lies at 250–253 (DEAH). 7 disordered regions span residues 287 to 306 (TKAA…SPSP), 757 to 786 (PAPA…FFST), 839 to 877 (EHSE…GRKK), 979 to 1005 (RPEH…PDPK), 1017 to 1054 (DPQE…RAGK), 1132 to 1151 (CTDL…PQEE), and 1159 to 1219 (LTHR…EWGL). A compositionally biased stretch (low complexity) spans 757–766 (PAPAPRATAP). The segment covering 863-873 (SEKRPAEEPRG) has biased composition (basic and acidic residues). Residues 871–877 (PRGGRKK) carry the Nuclear localization signal motif. The span at 1176 to 1185 (KTQSKISSFL) shows a compositional bias: polar residues. A PIP-box motif is present at residues 1178-1185 (QSKISSFL). Low complexity predominate over residues 1200-1219 (AGPSQSSGPPHGPAASEWGL).

Belongs to the helicase family. RAD3/XPD subfamily. As to quaternary structure, interacts with TERF1. Interacts (via PIP-box) with PCNA; the interaction is direct and essential for suppressing telomere fragility. Interacts with MMS19; the interaction mediates the association of RTEL1 with the cytosolic iron-sulfur protein assembly (CIA) complex.

It localises to the nucleus. It catalyses the reaction ATP + H2O = ADP + phosphate + H(+). A probable ATP-dependent DNA helicase implicated in telomere-length regulation, DNA repair and the maintenance of genomic stability. Acts as an anti-recombinase to counteract toxic recombination and limit crossover during meiosis. Regulates meiotic recombination and crossover homeostasis by physically dissociating strand invasion events and thereby promotes noncrossover repair by meiotic synthesis dependent strand annealing (SDSA) as well as disassembly of D loop recombination intermediates. Also disassembles T loops and prevents telomere fragility by counteracting telomeric G4-DNA structures, which together ensure the dynamics and stability of the telomere. The chain is Regulator of telomere elongation helicase 1 from Homo sapiens (Human).